Consider the following 256-residue polypeptide: Ribonuclease 3 (256 aa).

Residues 3–125 (LEALQQRLGY…IFGAVFLDGG (123 aa)) form the RNase III domain. A Mg(2+)-binding site is contributed by E38. D42 is a catalytic residue. Residues D111 and E114 each coordinate Mg(2+). Residue E114 is part of the active site. One can recognise a DRBM domain in the interval 152-222 (DAKTLLQEYL…AKLALEEAHR (71 aa)). Positions 227–256 (LVKRSRAERTGKTRKQATPPDPQLSLRLKE) are disordered.

Belongs to the ribonuclease III family. Homodimer. The cofactor is Mg(2+).

Its subcellular location is the cytoplasm. The catalysed reaction is Endonucleolytic cleavage to 5'-phosphomonoester.. Its function is as follows. Digests double-stranded RNA. Involved in the processing of primary rRNA transcript to yield the immediate precursors to the large and small rRNAs (23S and 16S). Processes some mRNAs, and tRNAs when they are encoded in the rRNA operon. Processes pre-crRNA and tracrRNA of type II CRISPR loci if present in the organism. This chain is Ribonuclease 3, found in Ralstonia nicotianae (strain ATCC BAA-1114 / GMI1000) (Ralstonia solanacearum).